An 894-amino-acid chain; its full sequence is Histone-lysine N-methyltransferase PRDM9 (894 aa).

2 disordered regions span residues 1–23 and 143–174; these read MSPE…RKPM and SGSE…LRKK. The 64-residue stretch at 23–86 folds into the KRAB-related domain; the sequence is MVKDAFKDIS…RRQAIKLQVD (64 aa). The span at 143 to 164 shows a compositional bias: polar residues; that stretch reads SGSEQAQKPVSPSGEASTSGQH. The Zn(2+) site is built by C205, C208, C216, and H219. In terms of domain architecture, SET spans 244–358; the sequence is PGLRIGPSGI…PGCELLVWYG (115 aa). Residues 256–258, Y291, and 320–321 each bind S-adenosyl-L-methionine; these read AGL and NC. Residue 288–294 participates in substrate binding; that stretch reads NNGYSWL. Y357 serves as a coordination point for substrate. N6,N6,N6-trimethyllysine; alternate is present on K368. Residue K368 is modified to N6-methyllysine; alternate. N6-methyllysine occurs at positions 372 and 374. The segment at 388–411 adopts a C2H2-type 1 zinc-finger fold; it reads HPCPSCCLAFSSQKFLSQHVERNH. Positions 390, 393, 406, and 411 each coordinate Zn(2+). A disordered region spans residues 408-469; it reads ERNHSSQNFP…SKLLNKRTWQ (62 aa). Residues 444 to 461 show a composition bias toward basic and acidic residues; it reads PHSRNDKTKGQEIKERSK. The C2H2-type 2; degenerate zinc-finger motif lies at 524–546; it reads VKYGECGQGFSVKSDVITHQRTH. 12 C2H2-type zinc fingers span residues 552–574, 580–602, 608–630, 636–658, 664–686, 692–714, 720–742, 748–770, 776–798, 804–826, 832–854, and 860–882; these read YVCR…QRIH, YVCR…QRTH, and YVCR…QRRH. Residues C722, C725, H738, H742, C750, C753, H766, H770, C778, C781, H794, H798, C806, C809, H822, and H826 each coordinate Zn(2+). The tract at residues 730–820 is DNA-binding; that stretch reads SNKSHLLRHQ…RGFSNKSHLL (91 aa).

It belongs to the class V-like SAM-binding methyltransferase superfamily. In terms of assembly, homodimer. Interacts with EHMT2 and CDYL; interaction only takes place when PRDM9 is bound to hotspot DNA. Interacts with CXXC1; this interaction does not link PRDM9-activated recombination hotspot sites with DSB machinery and is not required for the hotspot recognition pathway. Forms a complex with EWSR1, REC8, SYCP3 and SYCP1; complex formation is dependent of phosphorylated form of REC8 and requires PRDM9 bound to hotspot DNA; EWSR1 joins PRDM9 with the chromosomal axis through REC8. In terms of processing, mono-methylated; automethylated. Tri-methylated; automethylated. Mono-methylation is predominant; automethylation is lower and slower than H3 peptide methylation and is in a highest S-adenosyl-L-methionine concentration-dependent. There are two major sites for automethylation at Lys-368 and Lys-374. Lysines can be simultaneously methylated, such as Lys-368(me3)/Lys-372(me1), Lys-368(me1)/Lys-374(me1) and Lys-368(me1)/Lys-372(me1)/Lys-374(me1). Automethylation is an intramolecular (cis) process.

The protein localises to the nucleus. The protein resides in the chromosome. It catalyses the reaction L-lysyl-[protein] + S-adenosyl-L-methionine = N(6)-methyl-L-lysyl-[protein] + S-adenosyl-L-homocysteine + H(+). The catalysed reaction is N(6)-methyl-L-lysyl-[protein] + S-adenosyl-L-methionine = N(6),N(6)-dimethyl-L-lysyl-[protein] + S-adenosyl-L-homocysteine + H(+). It carries out the reaction L-lysyl(4)-[histone H3] + 3 S-adenosyl-L-methionine = N(6),N(6),N(6)-trimethyl-L-lysyl(4)-[histone H3] + 3 S-adenosyl-L-homocysteine + 3 H(+). The enzyme catalyses L-lysyl(36)-[histone H3] + 3 S-adenosyl-L-methionine = N(6),N(6),N(6)-trimethyl-L-lysyl(36)-[histone H3] + 3 S-adenosyl-L-homocysteine + 3 H(+). It catalyses the reaction L-lysyl(9)-[histone H3] + 3 S-adenosyl-L-methionine = N(6),N(6),N(6)-trimethyl-L-lysyl(9)-[histone H3] + 3 S-adenosyl-L-homocysteine + 3 H(+). The catalysed reaction is L-lysyl(20)-[histone H4] + S-adenosyl-L-methionine = N(6)-methyl-L-lysyl(20)-[histone H4] + S-adenosyl-L-homocysteine + H(+). It carries out the reaction N(6)-methyl-L-lysyl(20)-[histone H4] + S-adenosyl-L-methionine = N(6),N(6)-dimethyl-L-lysyl(20)-[histone H4] + S-adenosyl-L-homocysteine + H(+). Inhibited by suramin with an IC(50) of 4.1 uM. Its function is as follows. Histone methyltransferase that sequentially mono-, di-, and tri-methylates both 'Lys-4' (H3K4) and 'Lys-36' (H3K36) of histone H3 to produce respectively trimethylated 'Lys-4' (H3K4me3) and trimethylated 'Lys-36' (H3K36me3) histone H3 and plays a key role in meiotic prophase by determining hotspot localization thereby promoting meiotic recombination. Can also methylate all four core histones with H3 being the best substrate and the most highly modified. Is also able, on one hand, to mono and di-methylate H4K20 and on other hand to trimethylate H3K9 with the di-methylated H3K9 as the best substrate. During meiotic prophase, binds specific DNA sequences through its zinc finger domains thereby determining hotspot localization where it promotes local H3K4me3 and H3K36me3 enrichment on the same nucleosomes through its histone methyltransferase activity. Thereby promotes double-stranded breaks (DSB) formation, at this subset of PRDM9-binding sites, that initiates meiotic recombination for the proper meiotic progression. During meiotic progression hotspot-bound PRDM9 interacts with several complexes; in early leptonema binds CDYL and EHMT2 followed by EWSR1 and CXXC1 by the end of leptonema. EWSR1 joins PRDM9 with the chromosomal axis through REC8. In this way, controls the DSB repair pathway, pairing of homologous chromosomes and sex body formation. Moreover plays a central role in the transcriptional activation of genes during early meiotic prophase thanks to H3K4me3 and H3K36me3 enrichment that represents a specific tag for epigenetic transcriptional activation. In addition performs automethylation. Acetylation and phosphorylation of histone H3 attenuate or prevent histone H3 methylation. The chain is Histone-lysine N-methyltransferase PRDM9 from Homo sapiens (Human).